Here is a 1713-residue protein sequence, read N- to C-terminus: Serine/threonine-protein kinase MRCK beta (1713 aa).

The Protein kinase domain maps to 76-342 (FEIIKVIGRG…IEDFKKHAFF (267 aa)). Residues 82–90 (IGRGAFGEV) and Lys105 contribute to the ATP site. Asp200 acts as the Proton acceptor in catalysis. Phosphoserine; by autocatalysis occurs at positions 221 and 233. At Thr239 the chain carries Phosphothreonine; by autocatalysis. The region spanning 343-413 (EGLNWENIRN…TTESCFSDRG (71 aa)) is the AGC-kinase C-terminal domain. At Thr423 the chain carries Phosphothreonine. The stretch at 434 to 649 (LENSLQIEAY…ASKERKLREH (216 aa)) forms a coiled coil. Positions 461–485 (LQESTQTVQSLHGSTRALGNSNRDK) are disordered. Positions 463–481 (ESTQTVQSLHGSTRALGNS) are enriched in polar residues. The residue at position 671 (Arg671) is an Omega-N-methylarginine. 2 coiled-coil regions span residues 681 to 815 (QEIS…AHWE) and 882 to 939 (ALEA…FRAD). Ser927 is modified (phosphoserine). Tyr954 is subject to Phosphotyrosine. Composition is skewed to polar residues over residues 971 to 994 (ASDQ…TSTE) and 1001 to 1014 (RSQQ…LPNT). Residues 971-1014 (ASDQETQASKLDLSPSVSVATSTEQQEDAARSQQRPSTVPLPNT) are disordered. Residues 1026–1076 (AHQFSIKSFPSPTQCSHCTSLMVGLIRQGYACEVCAFSCHVSCKDSAPQVC) form a Phorbol-ester/DAG-type zinc finger. A PH domain is found at 1096 to 1215 (GTAYKGYVKV…WVGILEGLQA (120 aa)). The CNH domain occupies 1241-1515 (IKTVLAAAIV…RPLNSDGSLN (275 aa)). Residues 1585–1598 (ISNPTNFNHVAHMG) form the CRIB domain. The interval 1615–1713 (PTAQEEKQGP…EGLDQPACDA (99 aa)) is disordered. The segment covering 1666-1677 (DFDKEPDSDSTK) has biased composition (basic and acidic residues). Phosphoserine occurs at positions 1682, 1684, 1688, 1692, and 1695.

It belongs to the protein kinase superfamily. AGC Ser/Thr protein kinase family. DMPK subfamily. In terms of assembly, homodimer and homotetramer via the coiled coil regions. Interacts tightly with GTP-bound but not GDP-bound CDC42. Interacts with TJP1; this interaction requires the presence of catalytically active CDC42. Forms a tripartite complex with MYO18A and LURAP1 with the latter acting as an adapter connecting CDC42BPB and MYO18A. LURAP1 binding results in activation of CDC42BPB by abolition of its negative autoregulation. Interacts with STRIP1, STRN3 and SIKE1. Interacts with CPNE4 (via VWFA domain). Interacts with LURAP1. Interacts (via AGC-kinase C-terminal domain) with FAM89B/LRAP25 (via LRR repeat). Forms a tripartite complex with FAM89B/LRAP25 and LIMK1. Requires Mg(2+) as cofactor. In terms of processing, proteolytically cleaved by caspases upon apoptosis induction. In terms of tissue distribution, expressed in all tissues examined with highest levels in lung and kidney.

It is found in the cytoplasm. The protein resides in the cell membrane. Its subcellular location is the cell junction. It localises to the cell projection. The protein localises to the lamellipodium. It carries out the reaction L-seryl-[protein] + ATP = O-phospho-L-seryl-[protein] + ADP + H(+). The enzyme catalyses L-threonyl-[protein] + ATP = O-phospho-L-threonyl-[protein] + ADP + H(+). Maintained in an inactive, closed conformation by an interaction between the kinase domain and the negative autoregulatory C-terminal coiled-coil region. Agonist binding to the phorbol ester binding site disrupts this, releasing the kinase domain to allow N-terminus-mediated dimerization and kinase activation by transautophosphorylation. Inhibited by chelerythrine chloride. In terms of biological role, serine/threonine-protein kinase which is an important downstream effector of CDC42 and plays a role in the regulation of cytoskeleton reorganization and cell migration. Regulates actin cytoskeletal reorganization via phosphorylation of PPP1R12C and MYL9/MLC2. In concert with MYO18A and LURAP1, is involved in modulating lamellar actomyosin retrograde flow that is crucial to cell protrusion and migration. Phosphorylates PPP1R12A. In concert with FAM89B/LRAP25 mediates the targeting of LIMK1 to the lamellipodium resulting in its activation and subsequent phosphorylation of CFL1 which is important for lamellipodial F-actin regulation. This is Serine/threonine-protein kinase MRCK beta from Rattus norvegicus (Rat).